We begin with the raw amino-acid sequence, 950 residues long: Glycine dehydrogenase (decarboxylating) (950 aa).

Lys-698 is modified (N6-(pyridoxal phosphate)lysine).

It belongs to the GcvP family. In terms of assembly, the glycine cleavage system is composed of four proteins: P, T, L and H. It depends on pyridoxal 5'-phosphate as a cofactor.

It catalyses the reaction N(6)-[(R)-lipoyl]-L-lysyl-[glycine-cleavage complex H protein] + glycine + H(+) = N(6)-[(R)-S(8)-aminomethyldihydrolipoyl]-L-lysyl-[glycine-cleavage complex H protein] + CO2. In terms of biological role, the glycine cleavage system catalyzes the degradation of glycine. The P protein binds the alpha-amino group of glycine through its pyridoxal phosphate cofactor; CO(2) is released and the remaining methylamine moiety is then transferred to the lipoamide cofactor of the H protein. The sequence is that of Glycine dehydrogenase (decarboxylating) from Neisseria meningitidis serogroup C / serotype 2a (strain ATCC 700532 / DSM 15464 / FAM18).